Here is a 650-residue protein sequence, read N- to C-terminus: DNA mismatch repair protein MutL (650 aa).

Disordered stretches follow at residues 358-392 and 408-448; these read EASQ…QPLV and QPRP…QSAA. Over residues 367-384 the composition is skewed to pro residues; it reads TPQPRPALTPGHPDPPPQ. Positions 430-444 are enriched in low complexity; it reads PYAPIAAAPVPASEP.

Belongs to the DNA mismatch repair MutL/HexB family.

In terms of biological role, this protein is involved in the repair of mismatches in DNA. It is required for dam-dependent methyl-directed DNA mismatch repair. May act as a 'molecular matchmaker', a protein that promotes the formation of a stable complex between two or more DNA-binding proteins in an ATP-dependent manner without itself being part of a final effector complex. The chain is DNA mismatch repair protein MutL from Geobacter sp. (strain M21).